A 1232-amino-acid chain; its full sequence is MVILMIKIGFVSTIDSDDLVFEEAYKEIKKYGIEFKILDYKCSRKEFEEFLEFIKEANIVFTKLMGGKNAFKYYDELAEFCKRHNIPFLPLPTISEIHPDLEKDRTVDDDVKNKVVKYLGYEGVYNYKNLLLYLANRFGNLNVEYEEPRPMPWQGIYYKGKYFETLDDYLNYLKELGRDLDKPIIGVLFYRNWFVANNIDYVNDLIDIIENKGAIPIAVFSSHLKNELGSIGTLETFKRFFYKDGKPIVHALINTTMFTLSMGVKAELLKDEPEFLKELNVPILQGIISTGFIEDWKKSVSGLNPIDLIIGMAMPEFDGAIIHFPIGGKEKIKDGEVGVPIIKYRAIRDRAEKIVDLALRYANLKLKSNKDKKIAIIFHNYPPRNDKIASAFGLDSPESVVNILKEMKKRGFIVDEIPKNGTELIKKMLNYATNDKRFLTEEMIKKAVGKVKKEDYEKWFNSLSEKVKQELIKNWGAIPGDVMNFDGELIIPGIINGNVFISVQPPRGFGENPSAIYHSPDLPPTHYYIAFYKWIKDVFKADAIMHIGKHGNLEWLPGKCVGLSNECYPDICMELPNIYPFIVNNPGEGTQAKRRSYATIISHLIPPMTISDLYGDLVELEKSIDDYYETENKEKKEFLKKEILKKIKELKLDEDLLDGKVIDEEINDENFEKLLNKIHDYLETLKNRQINDGLHIMGVPLEGDKLVNMLFMIIRYQFNYLEILAEILDYSWEELNENKGKYHKILDEINEIGLNLLKEYMQYNFDENKIDELKTVKINSKLRDVLKTVSTIYKNLMKVDEEIINAVNALEGFYIPPRVAGAPTKDINCLPTGRNFYSCNPQEIPTKSAYEMGKKLAEDLINKYLKEEGKYPEYIGVIVWGSPTMRTKGDDIGEILYLLGVKPVWNKMGRVVGLEVIPLEELGRPRIDVTLRISGLFRDTFPNVVELIDEAIKMVANLDEPDEMNYVKKHYREEVEEKIKKGIDEKTAKETSLYRIFSDKPGCYGAGVSHLIDEKNWESIEDFAKVYVEWGGYAYGKGYYGVEAKEEFINRLSKIELTVKNEDSQEWDIFEGDDFNSYHGGLIASVTYYSGKKPVSYVGDTSNPNDIRTKHLKEEGKEIFRTKIMNPKWIEGMKRHGYKGAADFSKYVDHMFAWDATSGIIDDWMYEKIAEKYVFDKDMEEFFKENNPYALLNITERLLEAIERGMWKADEEMKEKLRKKYLEIEGMIEEKL.

This sequence belongs to the Mg-chelatase subunit H family.

This is an uncharacterized protein from Methanocaldococcus jannaschii (strain ATCC 43067 / DSM 2661 / JAL-1 / JCM 10045 / NBRC 100440) (Methanococcus jannaschii).